A 1893-amino-acid chain; its full sequence is Endoribonuclease Dicer (1893 aa).

The Helicase ATP-binding domain maps to 41-217; sequence LLEAALDHNT…DLEEKIQKLE (177 aa). 54–61 provides a ligand contact to ATP; it reads LNSGSGKT. The DECH box signature appears at 165 to 168; the sequence is DECH. Positions 400–424 are disordered; it reads VSWSDSEDDDDEDEEIEEKEKTETS. Residues 404-416 show a composition bias toward acidic residues; it reads DSEDDDDEDEEIE. The region spanning 424 to 593 is the Helicase C-terminal domain; sequence SFPSPFTNIL…SIDCGNTESE (170 aa). Residues 621-713 form the Dicer dsRNA-binding fold domain; sequence AIGHINRYCA…MPVGKETVKY (93 aa). The interval 718 to 737 is disordered; sequence DLHDEEETSVPGRPGSTKRR. The 151-residue stretch at 886–1036 folds into the PAZ domain; the sequence is KFVEDIEKSE…LVPELCAIHP (151 aa). RNase III domains lie at 1249-1380 and 1637-1795; these read TSDM…ETSG and FENF…MDSG. Glu1293, Asp1371, Glu1374, Glu1676, Asp1781, and Glu1784 together coordinate Mg(2+). The DRBM domain maps to 1820–1885; the sequence is VPRSPVRELL…ARRALRSLKA (66 aa).

This sequence belongs to the helicase family. Dicer subfamily. In terms of assembly, component of the RISC loading complex (RLC), or micro-RNA (miRNA) loading complex (miRLC), which is composed of dicer1, ago2 and tarbp2; dicer1 and tarbp2 are required to process precursor miRNAs (pre-miRNAs) to mature miRNAs and then load them onto ago2. Note that the trimeric RLC/miRLC is also referred to as RISC. Mg(2+) serves as cofactor. Mn(2+) is required as a cofactor.

The protein localises to the cytoplasm. It catalyses the reaction Endonucleolytic cleavage to 5'-phosphomonoester.. Double-stranded RNA (dsRNA) endoribonuclease playing a central role in short dsRNA-mediated post-transcriptional gene silencing. Cleaves naturally occurring long dsRNAs and short hairpin pre-microRNAs (miRNA) into fragments of twenty-one to twenty-three nucleotides with 3' overhang of two nucleotides, producing respectively short interfering RNAs (siRNA) and mature microRNAs. SiRNAs and miRNAs serve as guide to direct the RNA-induced silencing complex (RISC) to complementary RNAs to degrade them or prevent their translation. Gene silencing mediated by siRNAs, also called RNA interference, controls the elimination of transcripts from mobile and repetitive DNA elements of the genome but also the degradation of exogenous RNA of viral origin for instance. The miRNA pathway on the other side is a mean to specifically regulate the expression of target genes. In Xenopus tropicalis (Western clawed frog), this protein is Endoribonuclease Dicer (dicer1).